The primary structure comprises 613 residues: MESMFEDDISILTQEALGPSEVWLDGPGDPSLGGDMCSASHFALITAYGDIKERLGGLERENATLRRRLKVYEIKYPLITDFGEEHGFPLYEIKDGSLLEVEKVSLQQRLNQFQHELQKNKEQEEQLGEMIQAYEKLCVEKSDLETELGEMRALVETHLRQICGLEKQLQQQQGLRDAAFSSLSPPAVPATACPDLDLHYLALRGGPALGHAGWPGPTSVSVSELERRRLEEALEAAQGEARGAQLREEQLQAECERLQGELKQLQETRAQDLASNQSECGMAWVKRVGDDQVNLALAYTELTEELGRLRELSSLQGRILRTLLQEQARNAGQRHSPLSQRHSPAPACPSPSPPARPPPCAPCQSPAAQRRSPVPPCPSPQQRRSPASPSCPSPVPQRRSPVPPSCQSPSPQRRSPVPPSCPAPQPRPPPPPGERTLAERAYAKPPSHHAKAGFQGRRSYSELAEGAAYAAASPAWLQAEAATLPKPRAYGGELYGPGRPLSPRRAFEGIRLRFEKQPSEEEEWAMPASPPSPEASTIRCASFCAGFPIPESPAATAYAHAEHAQSWPSINLLMETVGSDIRSCPLCQLGFPVGYPDDALIKHIDSHLENSKI.

Positions 1 to 280 (MESMFEDDIS…QDLASNQSEC (280 aa)) are homodimerization. Positions 48-162 (YGDIKERLGG…ALVETHLRQI (115 aa)) form a coiled coil. Ser184 carries the phosphoserine modification. Positions 218–277 (TSVSVSELERRRLEEALEAAQGEARGAQLREEQLQAECERLQGELKQLQETRAQDLASNQ) form a coiled coil. The interaction with TBK1 and IKBKE stretch occupies residues 281–330 (GMAWVKRVGDDQVNLALAYTELTEELGRLRELSSLQGRILRTLLQEQARN). A disordered region spans residues 328–457 (ARNAGQRHSP…HHAKAGFQGR (130 aa)). The span at 346 to 361 (PACPSPSPPARPPPCA) shows a compositional bias: pro residues. Positions 362-372 (PCQSPAAQRRS) are enriched in low complexity. Phosphoserine is present on residues Ser365, Ser372, Ser379, Ser385, Ser400, and Ser415. A compositionally biased stretch (pro residues) spans 389 to 406 (PSCPSPVPQRRSPVPPSC). A compositionally biased stretch (pro residues) spans 416–433 (PVPPSCPAPQPRPPPPPG). A phosphoserine mark is found at Ser502 and Ser532. The UBZ1-type zinc-finger motif lies at 581–607 (IRSCPLCQLGFPVGYPDDALIKHIDSH). The Zn(2+) site is built by Cys584, Cys587, His603, and His607.

In terms of assembly, homodimer. May form a heterodimer with NAP1. Interacts with TKB1 and IKBKE. Weakly interacts with DDX3X.

In terms of biological role, adapter protein which constitutively binds TBK1 and IKBKE playing a role in antiviral innate immunity. Essential for the efficient induction of IRF-dependent transcription following infection with Sendai virus. This Rattus norvegicus (Rat) protein is TANK-binding kinase 1-binding protein 1.